The sequence spans 241 residues: CRISPR-associated endoribonuclease Cas6 2 (241 aa).

Tyrosine 28 acts as the Proton acceptor in catalysis. The Proton donor role is filled by histidine 40.

The protein belongs to the CRISPR-associated protein Cas6/Cse3/CasE family.

CRISPR (clustered regularly interspaced short palindromic repeat) is an adaptive immune system that provides protection against mobile genetic elements (viruses, transposable elements and conjugative plasmids). CRISPR clusters contain sequences complementary to antecedent mobile elements and target invading nucleic acids. CRISPR clusters are transcribed and processed into CRISPR RNA (crRNA). This protein processes pre-crRNA into individual crRNA units. This Methanocaldococcus jannaschii (strain ATCC 43067 / DSM 2661 / JAL-1 / JCM 10045 / NBRC 100440) (Methanococcus jannaschii) protein is CRISPR-associated endoribonuclease Cas6 2 (cas6b).